The primary structure comprises 289 residues: Serine/threonine-protein phosphatase Pgam5, mitochondrial (289 aa).

This sequence belongs to the phosphoglycerate mutase family. BPG-dependent PGAM subfamily. As to quaternary structure, interacts with Pk92B/ASK1.

It localises to the mitochondrion outer membrane. It carries out the reaction O-phospho-L-seryl-[protein] + H2O = L-seryl-[protein] + phosphate. The enzyme catalyses O-phospho-L-threonyl-[protein] + H2O = L-threonyl-[protein] + phosphate. Its function is as follows. Displays phosphatase activity for serine/threonine residues, and dephosphorylates and activates Pk92B kinase. Has apparently no phosphoglycerate mutase activity. In Drosophila mojavensis (Fruit fly), this protein is Serine/threonine-protein phosphatase Pgam5, mitochondrial.